An 83-amino-acid chain; its full sequence is Sulfur carrier protein TusA (83 aa).

C19 functions as the Cysteine persulfide intermediate in the catalytic mechanism.

It belongs to the sulfur carrier protein TusA family.

It localises to the cytoplasm. In terms of biological role, sulfur carrier protein which probably makes part of a sulfur-relay system. This is Sulfur carrier protein TusA from Aliivibrio salmonicida (strain LFI1238) (Vibrio salmonicida (strain LFI1238)).